Reading from the N-terminus, the 401-residue chain is Elongation factor Tu (401 aa).

One can recognise a tr-type G domain in the interval lysine 10–lysine 211. Positions glycine 19 to threonine 26 are G1. Residue glycine 19–threonine 26 participates in GTP binding. Position 26 (threonine 26) interacts with Mg(2+). The interval glycine 62–alanine 66 is G2. The G3 stretch occupies residues aspartate 83–glycine 86. GTP contacts are provided by residues aspartate 83–histidine 87 and asparagine 138–aspartate 141. The tract at residues asparagine 138–aspartate 141 is G4. The tract at residues serine 179–valine 181 is G5.

It belongs to the TRAFAC class translation factor GTPase superfamily. Classic translation factor GTPase family. EF-Tu/EF-1A subfamily. As to quaternary structure, monomer.

It is found in the cytoplasm. It catalyses the reaction GTP + H2O = GDP + phosphate + H(+). GTP hydrolase that promotes the GTP-dependent binding of aminoacyl-tRNA to the A-site of ribosomes during protein biosynthesis. This is Elongation factor Tu from Leptospira interrogans serogroup Icterohaemorrhagiae serovar copenhageni (strain Fiocruz L1-130).